Reading from the N-terminus, the 162-residue chain is 2-C-methyl-D-erythritol 2,4-cyclodiphosphate synthase (162 aa).

Residues aspartate 10 and histidine 12 each coordinate a divalent metal cation. 4-CDP-2-C-methyl-D-erythritol 2-phosphate-binding positions include 10–12 and 36–37; these read DVH and HS. Histidine 44 provides a ligand contact to a divalent metal cation. Residues 58 to 60, 63 to 67, and arginine 144 contribute to the 4-CDP-2-C-methyl-D-erythritol 2-phosphate site; these read DIG and FSDTD.

Belongs to the IspF family. As to quaternary structure, homotrimer. The cofactor is a divalent metal cation.

The enzyme catalyses 4-CDP-2-C-methyl-D-erythritol 2-phosphate = 2-C-methyl-D-erythritol 2,4-cyclic diphosphate + CMP. It participates in isoprenoid biosynthesis; isopentenyl diphosphate biosynthesis via DXP pathway; isopentenyl diphosphate from 1-deoxy-D-xylulose 5-phosphate: step 4/6. Functionally, involved in the biosynthesis of isopentenyl diphosphate (IPP) and dimethylallyl diphosphate (DMAPP), two major building blocks of isoprenoid compounds. Catalyzes the conversion of 4-diphosphocytidyl-2-C-methyl-D-erythritol 2-phosphate (CDP-ME2P) to 2-C-methyl-D-erythritol 2,4-cyclodiphosphate (ME-CPP) with a corresponding release of cytidine 5-monophosphate (CMP). This chain is 2-C-methyl-D-erythritol 2,4-cyclodiphosphate synthase, found in Burkholderia mallei (strain NCTC 10247).